Reading from the N-terminus, the 162-residue chain is ATP synthase subunit b (162 aa).

Residues L8–L28 traverse the membrane as a helical segment.

Belongs to the ATPase B chain family. As to quaternary structure, F-type ATPases have 2 components, F(1) - the catalytic core - and F(0) - the membrane proton channel. F(1) has five subunits: alpha(3), beta(3), gamma(1), delta(1), epsilon(1). F(0) has three main subunits: a(1), b(2) and c(10-14). The alpha and beta chains form an alternating ring which encloses part of the gamma chain. F(1) is attached to F(0) by a central stalk formed by the gamma and epsilon chains, while a peripheral stalk is formed by the delta and b chains.

The protein localises to the cell inner membrane. In terms of biological role, f(1)F(0) ATP synthase produces ATP from ADP in the presence of a proton or sodium gradient. F-type ATPases consist of two structural domains, F(1) containing the extramembraneous catalytic core and F(0) containing the membrane proton channel, linked together by a central stalk and a peripheral stalk. During catalysis, ATP synthesis in the catalytic domain of F(1) is coupled via a rotary mechanism of the central stalk subunits to proton translocation. Functionally, component of the F(0) channel, it forms part of the peripheral stalk, linking F(1) to F(0). This is ATP synthase subunit b from Pseudothermotoga lettingae (strain ATCC BAA-301 / DSM 14385 / NBRC 107922 / TMO) (Thermotoga lettingae).